The primary structure comprises 287 residues: uncharacterized protein (287 aa).

The next 7 membrane-spanning stretches (helical) occupy residues 27 to 47 (LTFS…FGVQ), 66 to 86 (LGTI…VTAF), 97 to 117 (WFWG…GVLL), 135 to 155 (IVFA…LSAL), 171 to 191 (IFIW…VLNF), 205 to 225 (LFPG…VYFV), and 254 to 274 (SALF…YFIL).

The protein localises to the cell membrane. This is an uncharacterized protein from Mycoplasma pneumoniae (strain ATCC 29342 / M129 / Subtype 1) (Mycoplasmoides pneumoniae).